Consider the following 378-residue polypeptide: Opsin Rh4 (378 aa).

Topologically, residues 1–53 (MEPLCNASEPPLRPEARSSGNGDLQFLGWNVPPDQIQYIPEHWLTQLEPPASM) are extracellular. An N-linked (GlcNAc...) asparagine glycan is attached at N6. Residues 54–78 (HYMLGVFYIFLFCASTVGNGMVIWI) form a helical membrane-spanning segment. At 79-90 (FSTSKSLRTPSN) the chain is on the cytoplasmic side. A helical transmembrane segment spans residues 91–111 (MFVLNLAVFDLIMCLKAPIFI). Residues 112 to 127 (YNSFHRGFALGNTWCQ) are Extracellular-facing. An intrachain disulfide couples C126 to C203. The helical transmembrane segment at 128 to 148 (IFASIGSYSGIGAGMTNAAIG) threads the bilayer. Residues 149–167 (YDRYNVITKPMNRNMTFTK) are Cytoplasmic-facing. Residues 168-192 (AVIMNIIIWLYCTPWVVLPLTQFWD) traverse the membrane as a helical segment. At 193-216 (RFVPEGYLTSCSFDYLSDNFDTRL) the chain is on the extracellular side. Residues 217–244 (FVGTIFFFSFVCPTLMILYYYSQIVGHV) traverse the membrane as a helical segment. Residues 245-280 (FSHEKALREQAKKMNVESLRSNVDKSKETAEIRIAK) lie on the Cytoplasmic side of the membrane. The chain crosses the membrane as a helical span at residues 281-304 (AAITICFLFFVSWTPYGVMSLIGA). The Extracellular segment spans residues 305 to 312 (FGDKSLLT). A helical membrane pass occupies residues 313-337 (PGATMIPACTCKLVACIDPFVYAIS). K324 is modified (N6-(retinylidene)lysine). Residues 338 to 378 (HPRYRLELQKRCPWLGVNEKSGEISSAQSTTTQEQQQTTAA) are Cytoplasmic-facing.

Belongs to the G-protein coupled receptor 1 family. Opsin subfamily. Post-translationally, phosphorylated on some or all of the serine and threonine residues present in the C-terminal region.

It localises to the membrane. Functionally, visual pigments are the light-absorbing molecules that mediate vision. They consist of an apoprotein, opsin, covalently linked to cis-retinal. This chain is Opsin Rh4 (Rh4), found in Drosophila melanogaster (Fruit fly).